The primary structure comprises 508 residues: Glycerol kinase (508 aa).

Residue threonine 14 participates in ADP binding. Residues threonine 14, threonine 15, and serine 16 each contribute to the ATP site. Residue threonine 14 coordinates sn-glycerol 3-phosphate. Arginine 18 provides a ligand contact to ADP. Positions 84, 85, 134, and 247 each coordinate sn-glycerol 3-phosphate. Residues arginine 84, glutamate 85, tyrosine 134, aspartate 247, and glutamine 248 each coordinate glycerol. Threonine 269 and glycine 313 together coordinate ADP. Positions 269, 313, 317, and 416 each coordinate ATP. Glycine 416 contributes to the ADP binding site.

It belongs to the FGGY kinase family.

The enzyme catalyses glycerol + ATP = sn-glycerol 3-phosphate + ADP + H(+). It participates in polyol metabolism; glycerol degradation via glycerol kinase pathway; sn-glycerol 3-phosphate from glycerol: step 1/1. Its activity is regulated as follows. Inhibited by fructose 1,6-bisphosphate (FBP). Its function is as follows. Key enzyme in the regulation of glycerol uptake and metabolism. Catalyzes the phosphorylation of glycerol to yield sn-glycerol 3-phosphate. The polypeptide is Glycerol kinase (Mycoplasmoides gallisepticum (strain R(low / passage 15 / clone 2)) (Mycoplasma gallisepticum)).